The primary structure comprises 1411 residues: MASISEPVTFREFCPLYYLLNAIPTKIQKGFRSIVVYLTALDTNGDYIAVGSSIGMLYLYCRHLNQMRKYNFEGKTESITVVKLLSCFDDLVAAGTASGRVAVFQLVSSLPGRNKQLRRFDVTGIHKNSITALAWSPNGMKLFSGDDKGKIVYSSLDLDQGLCNSQLVLEEPSSIVQLDYSQKVLLVSTLQRSLLFYTEEKSVRQIGTQPRKSTGKFGACFIPGLCKQSDLTLYASRPGLRLWKADVHGTVQATFILKDAFAGGVKPFELHPRLESPNSGSCSLPERHLGLVSCFFQEGWVLSWNEYSIYLLDTVNQATVAGLEGSGDIVSVSCTENEIFFLKGDRNIIRISSRPEGLTSTVRDGLEMSGCSERVHVQQAEKLPGATVSETRLRGSSMASSVASEPRSRSSSLNSTDSGSGLLPPGLQATPELGKGSQPLSQRFNAISSEDFDQELVVKPIKVKRKKKKKKTEGGSRSTCHSSLESTPCSEFPGDSPQSLNTDLLSMTSSVLGSSVDQLSAESPDQESSFNGEVNGVPQENTDPETFNVLEVSGSMPDSLAEEDDIRTEMPHCHHAHGRELLNGAREDVGGSDVTGLGDEPCPADDGPNSTQLPFQEQDSSPGAHDGEDIQPIGPQSTFCEVPLLNSLTVPSSLSWAPSAEQWLPGTRADEGSPVEPSQEQDILTSMEASGHLSTNLWHAVTDDDTGQKEIPISERVLGSVGGQLTPVSALAASTHKPWLEQPPRDQTLTSSDEEDIYAHGLPSSSSETSVTELGPSCSQQDLSRLGAEDAGLLKPDQFAESWMGYSGPGYGILSLVVSEKYIWCLDYKGGLFCSALPGAGLRWQKFEDAVQQVAVSPSGALLWKIEQKSNRAFACGKVTIKGKRHWYEALPQAVFVALSDDTAWIIRTSGDLYLQTGLSVDRPCARAVKVDCPYPLSQITARNNVVWALTEQRALLYREGVSSFCPEGEQWKCDIVSERQALEPVCITLGDQQTLWALDIHGNLWFRTGIISKKPQGDDDHWWQVSITDYVVFDQCSLFQTIIHATHSVATAAQAPVEKVADKLRMAFWSQQLQCQPSLLGVNNSGVWISSGKNEFHVAKGSLIGTYWNHVVPRGTASATKWAFVLASAAPTKEGSFLWLCQSSKDLCSVSAQSAQSRPSTVQLPPEAEMRAYAACQDALWALDSLGQVFIRTLSKSCPTGMHWTRLDLSQLGAVKLTSLACGNQHIWACDSRGGVYFRVGTQPLNPSLMLPAWIMIEPPVQPAGVSLVSVHSSPNDQMLWVLDSRWNVHVRTGITEEMPVGTAWEHVPGLQACQLALSTRTVWARCPNGDLARRYGVTDKNPAGDYWKKIPGSVSCFTVTASDELWAVGPPGYLLQRLTKTFSHSHGTQKSSQAAMPHPEDLEDEWEVI.

7 WD repeats span residues 23 to 66 (IPTK…HLNQ), 67 to 114 (MRKY…PGRN), 115 to 161 (KQLR…LDQG), 162 to 203 (LCNS…EKSV), 204 to 265 (RQIG…AGGV), 266 to 309 (KPFE…EYSI), and 310 to 343 (YLLDTVNQATVAGLEGSGDIVSVSCTENEIFFLK). 4 disordered regions span residues 379–439 (QAEK…GSQP), 463–542 (VKRK…QENT), 579–637 (RELL…GPQS), and 758–779 (YAHGLPSSSSETSVTELGPSCS). Over residues 400 to 420 (SSVASEPRSRSSSLNSTDSGS) the composition is skewed to low complexity. Composition is skewed to polar residues over residues 475-489 (GSRSTCHSSLESTPC), 496-542 (SPQS…QENT), 608-621 (PNSTQLPFQEQDSS), and 763-779 (PSSSSETSVTELGPSCS). TECPR repeat units lie at residues 945–976 (NVVWALTEQRALLYREGVSSFCPEGEQWKCDI), 994–1027 (QTLWALDIHGNLWFRTGIISKKPQGDDDHWWQVS), 1179–1209 (DALWALDSLGQVFIRTLSKSCPTGMHWTRLD), 1226–1259 (QHIWACDSRGGVYFRVGTQPLNPSLMLPAWIMIE), 1279–1310 (QMLWVLDSRWNVHVRTGITEEMPVGTAWEHVP), and 1322–1353 (RTVWARCPNGDLARRYGVTDKNPAGDYWKKIP). The tract at residues 1388–1411 (HGTQKSSQAAMPHPEDLEDEWEVI) is disordered.

It belongs to the WD repeat KIAA0329 family. As to quaternary structure, interacts with the ATG8 family members GABARAP, GABARAPL1, GABARAPL2, MAP1LC3B and MAP1LC3C. In terms of tissue distribution, detected in skin fibroblast (at protein level).

Probably plays a role as positive regulator of autophagy. This is Tectonin beta-propeller repeat-containing protein 2 (TECPR2) from Homo sapiens (Human).